Reading from the N-terminus, the 147-residue chain is Large ribosomal subunit protein uL15 (147 aa).

The tract at residues 1–58 is disordered; the sequence is MKLHELKPAQGSTKAPKRLGRGIGSGTGKTSGKGHKGQKARAGGGVRPGFEGGQQPLA. Gly residues-rich tracts occupy residues 21 to 31 and 42 to 52; these read RGIGSGTGKTS and AGGGVRPGFEG.

Belongs to the universal ribosomal protein uL15 family. In terms of assembly, part of the 50S ribosomal subunit.

Its function is as follows. Binds to the 23S rRNA. The chain is Large ribosomal subunit protein uL15 from Desulfitobacterium hafniense (strain Y51).